Consider the following 67-residue polypeptide: MRCFPVFIILLLLIASAPCFDARTKTDDDVPLSSLRDNLKRTIRTRLNIRECCEDGWCCTAAPLTGR.

The signal sequence occupies residues Met1 to Cys19. Positions Phe20–Arg50 are excised as a propeptide. Residues Glu51 and Glu54 each carry the 4-carboxyglutamate modification. 2 disulfide bridges follow: Cys52/Cys58 and Cys53/Cys59. Trp57 is subject to 6'-bromotryptophan. A glycan (O-linked (GalNAc...) threonine) is linked at Thr60. A 4-hydroxyproline modification is found at Pro63. The propeptide occupies Leu64–Arg67.

Post-translationally, O-glycan consists of the disaccharide Gal-GalNAc. Expressed by the venom duct.

The protein localises to the secreted. Functionally, epsilon-conotoxins act at presynaptic membranes, blocking the calcium channels or G protein-coupled receptors. Causes hyperactivity upon intracranial injection into mice. Causes dorsal fins drooping in fish. The protein is Epsilon-conotoxin TxVA of Conus textile (Cloth-of-gold cone).